Consider the following 491-residue polypeptide: Glutamyl-tRNA(Gln) amidotransferase subunit A (491 aa).

Residues Lys-79 and Ser-154 each act as charge relay system in the active site. Residue Ser-178 is the Acyl-ester intermediate of the active site.

The protein belongs to the amidase family. GatA subfamily. As to quaternary structure, heterotrimer of A, B and C subunits.

The enzyme catalyses L-glutamyl-tRNA(Gln) + L-glutamine + ATP + H2O = L-glutaminyl-tRNA(Gln) + L-glutamate + ADP + phosphate + H(+). Functionally, allows the formation of correctly charged Gln-tRNA(Gln) through the transamidation of misacylated Glu-tRNA(Gln) in organisms which lack glutaminyl-tRNA synthetase. The reaction takes place in the presence of glutamine and ATP through an activated gamma-phospho-Glu-tRNA(Gln). The protein is Glutamyl-tRNA(Gln) amidotransferase subunit A of Alkaliphilus metalliredigens (strain QYMF).